A 432-amino-acid polypeptide reads, in one-letter code: Chaperone SurA (432 aa).

Positions 1-26 (MKKIASFCSAAVLIASSFLLNNTVQA) are cleaved as a signal peptide. 2 PpiC domains span residues 176-277 (QTEY…KVQD) and 286-386 (VQEV…EVTG).

The protein localises to the periplasm. It carries out the reaction [protein]-peptidylproline (omega=180) = [protein]-peptidylproline (omega=0). Chaperone involved in the correct folding and assembly of outer membrane proteins. Recognizes specific patterns of aromatic residues and the orientation of their side chains, which are found more frequently in integral outer membrane proteins. May act in both early periplasmic and late outer membrane-associated steps of protein maturation. This chain is Chaperone SurA, found in Idiomarina loihiensis (strain ATCC BAA-735 / DSM 15497 / L2-TR).